We begin with the raw amino-acid sequence, 542 residues long: Retron Ec83 probable ATPase (542 aa).

The short motif at 92–99 (GNNGCGKS) is the ATP-binding element.

In terms of biological role, probable ATPase component of antiviral defense system retron Ec83, composed of a non-coding RNA (ncRNA), a reverse transcriptase (RT), this protein and a putative HNH endonuclease. Expression of retron Ec83 confers protection against bacteriophage T2, T4 and T6. At multiplicity of infection (MOI) of 0.02 cultures slow growth when infected with T4 but do not collapse, at MOI 2 cultures enter growth stasis. The sequence is that of Retron Ec83 probable ATPase from Escherichia coli.